Reading from the N-terminus, the 281-residue chain is Diaminopimelate epimerase (281 aa).

Asn-14 and Asn-65 together coordinate substrate. The active-site Proton donor is Cys-74. Substrate is bound by residues 75 to 76 (GN), Asn-165, Asn-198, and 216 to 217 (ER). The active-site Proton acceptor is the Cys-225. Residue 226–227 (GT) coordinates substrate.

The protein belongs to the diaminopimelate epimerase family. In terms of assembly, homodimer.

It localises to the cytoplasm. The catalysed reaction is (2S,6S)-2,6-diaminopimelate = meso-2,6-diaminopimelate. It participates in amino-acid biosynthesis; L-lysine biosynthesis via DAP pathway; DL-2,6-diaminopimelate from LL-2,6-diaminopimelate: step 1/1. Its function is as follows. Catalyzes the stereoinversion of LL-2,6-diaminopimelate (L,L-DAP) to meso-diaminopimelate (meso-DAP), a precursor of L-lysine and an essential component of the bacterial peptidoglycan. The polypeptide is Diaminopimelate epimerase (Leptospira interrogans serogroup Icterohaemorrhagiae serovar copenhageni (strain Fiocruz L1-130)).